The primary structure comprises 469 residues: 3-isopropylmalate dehydratase large subunit (469 aa).

Positions 350, 410, and 413 each coordinate [4Fe-4S] cluster.

Belongs to the aconitase/IPM isomerase family. LeuC type 1 subfamily. Heterodimer of LeuC and LeuD. The cofactor is [4Fe-4S] cluster.

The catalysed reaction is (2R,3S)-3-isopropylmalate = (2S)-2-isopropylmalate. The protein operates within amino-acid biosynthesis; L-leucine biosynthesis; L-leucine from 3-methyl-2-oxobutanoate: step 2/4. In terms of biological role, catalyzes the isomerization between 2-isopropylmalate and 3-isopropylmalate, via the formation of 2-isopropylmaleate. The chain is 3-isopropylmalate dehydratase large subunit from Brucella abortus (strain S19).